A 280-amino-acid polypeptide reads, in one-letter code: DNA repair protein XRCC2 (280 aa).

Ser-10 is subject to Phosphoserine.

Belongs to the RecA family. RAD51 subfamily. In terms of assembly, interacts with RAD51D. Part of the BCDX2 complex consisting of RAD51B, RAD51C, RAD51D and XRCC2; the complex has a ring-like structure arranged into a flat disk around a central channel. In the absence of DNA, the BCDX2 subcomplex XRCC2:RAD51D formed a multimeric ring structure; in the presence of single-stranded DNA it formed a filamentous structure with the ssDNA.

It is found in the nucleus. It localises to the cytoplasm. The protein localises to the cytoskeleton. The protein resides in the microtubule organizing center. Its subcellular location is the centrosome. Its function is as follows. Involved in the homologous recombination repair (HRR) pathway of double-stranded DNA, thought to repair chromosomal fragmentation, translocations and deletions. Part of the RAD51 paralog protein complex BCDX2 which acts in the BRCA1-BRCA2-dependent HR pathway. Upon DNA damage, BCDX2 acts downstream of BRCA2 recruitment and upstream of RAD51 recruitment. BCDX2 binds predominantly to the intersection of the four duplex arms of the Holliday junction and to junction of replication forks. The BCDX2 complex was originally reported to bind single-stranded DNA, single-stranded gaps in duplex DNA and specifically to nicks in duplex DNA. This Homo sapiens (Human) protein is DNA repair protein XRCC2 (XRCC2).